The primary structure comprises 264 residues: uncharacterized protein (264 aa).

Threonine 13–glycine 20 provides a ligand contact to NADP(+). A substrate-binding site is contributed by serine 141. Tyrosine 154 acts as the Proton acceptor in catalysis.

It belongs to the short-chain dehydrogenases/reductases (SDR) family.

This is an uncharacterized protein from Bacillus subtilis (strain 168).